The following is a 363-amino-acid chain: MIIDLTEIQDIHFFFRLEFFKEIYEILWVFVPILIFIVGITISVLAIVWLEREISAGIQQRIGPEYTGPFGVLQALADGTKLLFKENLIPSRGDIRLFSFGPAISVISIILSYSVIPFGYNFVLSDLNIGVFLWIAISSIAPIGLLMSGYGSNNKYSFLGGLRAAAQSISYEIPLTLCVLSISLLSNSLSTVDIVDAQSKYGFWGWNLWRQPMGFLVFLISSLAECERLPFDLPEAEEELIAGYQTEYSGIKFGLFYVASYLNLLVSSLFVTVLYLGGSNISIPYIFVSNFFEINKTYGVFVTIIGIFITLVKTFLFIFVSITTRWTLPRLRIDQLLNLGWKFLLPISLGNLLLTTSSQLFSL.

The next 6 helical transmembrane spans lie at 28 to 48, 98 to 118, 129 to 149, 253 to 273, 300 to 320, and 336 to 356; these read WVFV…LAIV, FSFG…VIPF, IGVF…LMSG, FGLF…FVTV, VFVT…FIFV, and LLNL…LLTT.

It belongs to the complex I subunit 1 family. As to quaternary structure, NDH is composed of at least 16 different subunits, 5 of which are encoded in the nucleus.

It localises to the plastid. The protein localises to the chloroplast thylakoid membrane. It catalyses the reaction a plastoquinone + NADH + (n+1) H(+)(in) = a plastoquinol + NAD(+) + n H(+)(out). The enzyme catalyses a plastoquinone + NADPH + (n+1) H(+)(in) = a plastoquinol + NADP(+) + n H(+)(out). Its function is as follows. NDH shuttles electrons from NAD(P)H:plastoquinone, via FMN and iron-sulfur (Fe-S) centers, to quinones in the photosynthetic chain and possibly in a chloroplast respiratory chain. The immediate electron acceptor for the enzyme in this species is believed to be plastoquinone. Couples the redox reaction to proton translocation, and thus conserves the redox energy in a proton gradient. In Phaseolus vulgaris (Kidney bean), this protein is NAD(P)H-quinone oxidoreductase subunit 1, chloroplastic.